The sequence spans 181 residues: Acireductone dioxygenase (181 aa).

Residues H97, H99, E103, and H141 each contribute to the Fe(2+) site. H97, H99, E103, and H141 together coordinate Ni(2+).

Belongs to the acireductone dioxygenase (ARD) family. As to quaternary structure, monomer. Fe(2+) serves as cofactor. The cofactor is Ni(2+).

It carries out the reaction 1,2-dihydroxy-5-(methylsulfanyl)pent-1-en-3-one + O2 = 3-(methylsulfanyl)propanoate + CO + formate + 2 H(+). The catalysed reaction is 1,2-dihydroxy-5-(methylsulfanyl)pent-1-en-3-one + O2 = 4-methylsulfanyl-2-oxobutanoate + formate + 2 H(+). It functions in the pathway amino-acid biosynthesis; L-methionine biosynthesis via salvage pathway; L-methionine from S-methyl-5-thio-alpha-D-ribose 1-phosphate: step 5/6. In terms of biological role, catalyzes 2 different reactions between oxygen and the acireductone 1,2-dihydroxy-3-keto-5-methylthiopentene (DHK-MTPene) depending upon the metal bound in the active site. Fe-containing acireductone dioxygenase (Fe-ARD) produces formate and 2-keto-4-methylthiobutyrate (KMTB), the alpha-ketoacid precursor of methionine in the methionine recycle pathway. Ni-containing acireductone dioxygenase (Ni-ARD) produces methylthiopropionate, carbon monoxide and formate, and does not lie on the methionine recycle pathway. The sequence is that of Acireductone dioxygenase from Pseudomonas syringae pv. tomato (strain ATCC BAA-871 / DC3000).